Consider the following 553-residue polypeptide: MPTEPETDYDPELGRKFIFVTGGVMSGLGKGITAASTGRLLKNAGFDVTAVKIDPYLNVDAGTMNPFQHGEVYVLKDGGEVDLDLGNYERFLDIDMTFDHNVTTGKTYQHVIEKERSGDYLGRTVQIIPHITDDIKRRIREAAEGNDVCIIEVGGTVGDIEGMPYLEALRQFAHEEDEDDILFTHVTLVPYSKNGEQKTKPTQHSVKELRSIGLQPDILVGRCSDKLDIDTKEKIALFCDVPTEAVFSNPDVDDIYHVPLMVEEEGLDQYVMEELDIATEALPEDERENRWRDLVTQNTEGEVDIALVGKYDLEDAYMSVHEALKHAGLEKNVDVNVQWVNSEKMNDHHADRMREADAIVVPGGFGARGTEGKIEAIRYARENDIPFLGLCLGFQMAVVEYARNVLDLDDAHSAELDEDTPHPVIDILPEQYEIEDMGGTMRLGAHETEIDANTLAATLYGGESCTERHRHRYEVNPEYIDDLEAAGLKFSGYAENRMEILELAPEDHPYFIGTQFHPEFRSRPTRASPPFVGLLEAVLGDDPHTVTTEEVSH.

Residues 1-277 are amidoligase domain; the sequence is MPTEPETDYD…DQYVMEELDI (277 aa). Residue Ser-26 participates in CTP binding. Residue Ser-26 coordinates UTP. ATP contacts are provided by residues 27–32 and Asp-84; that span reads GLGKGI. Mg(2+) is bound by residues Asp-84 and Glu-152. CTP contacts are provided by residues 159-161, 198-203, and Lys-234; these read DIE and KTKPTQ. UTP is bound by residues 198–203 and Lys-234; that span reads KTKPTQ. Val-252 is a binding site for ATP. Residues 307 to 544 enclose the Glutamine amidotransferase type-1 domain; sequence LVGKYDLEDA…LEAVLGDDPH (238 aa). An L-glutamine-binding site is contributed by Gly-364. Residue Cys-391 is the Nucleophile; for glutamine hydrolysis of the active site. Residues 392–395, Glu-415, and Arg-472 contribute to the L-glutamine site; that span reads LGFQ. Residues His-517 and Glu-519 contribute to the active site.

It belongs to the CTP synthase family. Homotetramer.

It is found in the cytoplasm. It carries out the reaction UTP + L-glutamine + ATP + H2O = CTP + L-glutamate + ADP + phosphate + 2 H(+). The catalysed reaction is L-glutamine + H2O = L-glutamate + NH4(+). The enzyme catalyses UTP + NH4(+) + ATP = CTP + ADP + phosphate + 2 H(+). The protein operates within pyrimidine metabolism; CTP biosynthesis via de novo pathway; CTP from UDP: step 2/2. With respect to regulation, allosterically activated by GTP, when glutamine is the substrate; GTP has no effect on the reaction when ammonia is the substrate. The allosteric effector GTP functions by stabilizing the protein conformation that binds the tetrahedral intermediate(s) formed during glutamine hydrolysis. Inhibited by the product CTP, via allosteric rather than competitive inhibition. Inhibited by 6-diazo-5-oxo-l-norleucine (DON). In terms of biological role, catalyzes the ATP-dependent amination of UTP to CTP with either L-glutamine or ammonia as the source of nitrogen. Regulates intracellular CTP levels through interactions with the four ribonucleotide triphosphates. The protein is CTP synthase of Haloarcula hispanica (strain ATCC 33960 / DSM 4426 / JCM 8911 / NBRC 102182 / NCIMB 2187 / VKM B-1755).